We begin with the raw amino-acid sequence, 147 residues long: Small ribosomal subunit protein uS13 (147 aa).

A disordered region spans residues 115–147 (SYKGRRHEAGLPVRGQRTKSTFRNSSSVGVKRS). A compositionally biased stretch (polar residues) spans 132 to 147 (TKSTFRNSSSVGVKRS).

This sequence belongs to the universal ribosomal protein uS13 family. Part of the 30S ribosomal subunit. Forms a loose heterodimer with protein S19. Forms two bridges to the 50S subunit in the 70S ribosome.

Located at the top of the head of the 30S subunit, it contacts several helices of the 16S rRNA. In the 70S ribosome it contacts the 23S rRNA (bridge B1a) and protein L5 of the 50S subunit (bridge B1b), connecting the 2 subunits; these bridges are implicated in subunit movement. This chain is Small ribosomal subunit protein uS13, found in Methanobrevibacter smithii (strain ATCC 35061 / DSM 861 / OCM 144 / PS).